Reading from the N-terminus, the 86-residue chain is Small ribosomal subunit protein uS17 (86 aa).

This sequence belongs to the universal ribosomal protein uS17 family. In terms of assembly, part of the 30S ribosomal subunit.

In terms of biological role, one of the primary rRNA binding proteins, it binds specifically to the 5'-end of 16S ribosomal RNA. The polypeptide is Small ribosomal subunit protein uS17 (Streptococcus gordonii (strain Challis / ATCC 35105 / BCRC 15272 / CH1 / DL1 / V288)).